The chain runs to 301 residues: Helicase VP6-A (301 aa).

Disordered stretches follow at residues 1 to 99 (MIDW…TTGT) and 163 to 208 (RRKE…TSVG). Composition is skewed to basic and acidic residues over residues 8–30 (ESGK…KDGE), 37–55 (GQKK…DRRV), and 67–81 (GFRE…RGDG). Position 82 (Lys82) interacts with ATP. 2 stretches are compositionally biased toward basic and acidic residues: residues 163–177 (RRKE…VAEK) and 186–202 (VHGD…KTPE).

Belongs to the orbivirus VP6 family. As to quaternary structure, homohexamer.

Its subcellular location is the virion. The catalysed reaction is ATP + H2O = ADP + phosphate + H(+). Functionally, ATP dependent RNA helicase essential for RNA packaging and viral transcription. Possesses ss- and dsRNA-binding capacity. The sequence is that of Helicase VP6-A (Segment-9) from Bluetongue virus 2 (isolate USA) (BTV 2).